The following is a 160-amino-acid chain: Troponin C, skeletal muscle (160 aa).

At Thr2 the chain carries N-acetylthreonine. 4 EF-hand domains span residues 15 to 50 (EMIAEFKAAFDMFDADGGGDISVKELGTVMRMLGQT), 51 to 86 (PTKEELDAIIEEVDEDGSGTIDFEEFLVMMVRQMKE), 91 to 126 (KSEEELAECFRIFDRNADGYIDAEELAEIFRASGEH), and 127 to 160 (VTDEEIESLMKDGDKNNDGRIDFDEFLKMMEGVQ). 19 residues coordinate Ca(2+): Asp28, Asp30, Asp34, Glu39, Asp64, Asp66, Ser68, Thr70, Glu75, Asp104, Asn106, Asp108, Tyr110, Glu115, Asp140, Asn142, Asp144, Arg146, and Glu151.

This sequence belongs to the troponin C family.

Its function is as follows. Troponin is the central regulatory protein of striated muscle contraction. Tn consists of three components: Tn-I which is the inhibitor of actomyosin ATPase, Tn-T which contains the binding site for tropomyosin and Tn-C. The binding of calcium to Tn-C abolishes the inhibitory action of Tn on actin filaments. This chain is Troponin C, skeletal muscle (TNNC2), found in Oryctolagus cuniculus (Rabbit).